Consider the following 222-residue polypeptide: MNEFKKYATRHIGLNAQALDDYTRIQSSYISPTIIEERQLNVAQMDVFSRLMMDRIIFLGTQIDDYTANVIQAQLLYLDSADPGKDISIYLNSPGGSVYAGYGIYDTMQYIGCDVATICTGMAASMASVLLVAGTKGKRFALPHSRVMIHQPLGGMQGQASDLEIAAREILRVKKELYTIISSHSGKPVEQVEKDSDRDYWMTAPEALEYGMIDKILEKNRK.

Ser125 functions as the Nucleophile in the catalytic mechanism. His150 is a catalytic residue.

It belongs to the peptidase S14 family. As to quaternary structure, fourteen ClpP subunits assemble into 2 heptameric rings which stack back to back to give a disk-like structure with a central cavity, resembling the structure of eukaryotic proteasomes.

The protein resides in the cytoplasm. It carries out the reaction Hydrolysis of proteins to small peptides in the presence of ATP and magnesium. alpha-casein is the usual test substrate. In the absence of ATP, only oligopeptides shorter than five residues are hydrolyzed (such as succinyl-Leu-Tyr-|-NHMec, and Leu-Tyr-Leu-|-Tyr-Trp, in which cleavage of the -Tyr-|-Leu- and -Tyr-|-Trp bonds also occurs).. Functionally, cleaves peptides in various proteins in a process that requires ATP hydrolysis. Has a chymotrypsin-like activity. Plays a major role in the degradation of misfolded proteins. This is ATP-dependent Clp protease proteolytic subunit from Porphyromonas gingivalis (strain ATCC BAA-308 / W83).